The following is a 433-amino-acid chain: 3-phosphoshikimate 1-carboxyvinyltransferase (433 aa).

3-phosphoshikimate-binding residues include Lys22, Ser23, and Arg27. Residue Lys22 coordinates phosphoenolpyruvate. Positions 95 and 123 each coordinate phosphoenolpyruvate. 3-phosphoshikimate is bound by residues Ser167, Gln169, Asp315, and Lys342. Gln169 serves as a coordination point for phosphoenolpyruvate. Catalysis depends on Asp315, which acts as the Proton acceptor. Phosphoenolpyruvate is bound by residues Arg346 and Arg387.

It belongs to the EPSP synthase family. In terms of assembly, monomer.

Its subcellular location is the cytoplasm. The enzyme catalyses 3-phosphoshikimate + phosphoenolpyruvate = 5-O-(1-carboxyvinyl)-3-phosphoshikimate + phosphate. It functions in the pathway metabolic intermediate biosynthesis; chorismate biosynthesis; chorismate from D-erythrose 4-phosphate and phosphoenolpyruvate: step 6/7. In terms of biological role, catalyzes the transfer of the enolpyruvyl moiety of phosphoenolpyruvate (PEP) to the 5-hydroxyl of shikimate-3-phosphate (S3P) to produce enolpyruvyl shikimate-3-phosphate and inorganic phosphate. This is 3-phosphoshikimate 1-carboxyvinyltransferase from Legionella pneumophila (strain Paris).